Consider the following 1250-residue polypeptide: TBC1 domain family member 9B (1250 aa).

GRAM domains are found at residues 142-209 and 288-356; these read LKMR…EKNA and ECYR…EKAD. Thr397 carries the phosphothreonine modification. A disordered region spans residues 397–443; it reads TPSKQPGSIGSRKASVVDPSTESSPAPQEGSEQPASPASPLSSRQSF. 4 positions are modified to phosphoserine: Ser411, Ser432, Ser435, and Ser463. Residues 414–443 show a composition bias toward polar residues; that stretch reads DPSTESSPAPQEGSEQPASPASPLSSRQSF. Residues 508–695 enclose the Rab-GAP TBC domain; sequence GIPESLRGEL…VIVDCFFYEG (188 aa). A helical transmembrane segment spans residues 668–688; sequence LSWFLTLFLSVMPFESAVVIV. In terms of domain architecture, EF-hand spans 879–914; that stretch reads HTPLLAGRMFRLLDENKDSLINFKEFVTGMSGMYHG. Disordered stretches follow at residues 974 to 999, 1069 to 1093, and 1128 to 1157; these read LPQEEQEGSGSEERGEEKGTSSPDYR, SARTGRKPRDCATEEDEPPAPELHQ, and VEGGSGEGQGSPSQLLSDDETKDDMSMSSY. A compositionally biased stretch (basic and acidic residues) spans 984 to 999; that stretch reads SEERGEEKGTSSPDYR. Ser1241 bears the Phosphoserine mark.

The protein resides in the membrane. May act as a GTPase-activating protein for Rab family protein(s). In Homo sapiens (Human), this protein is TBC1 domain family member 9B (TBC1D9B).